A 304-amino-acid chain; its full sequence is Release factor glutamine methyltransferase (304 aa).

Residues aspartate 144 and asparagine 188 each coordinate S-adenosyl-L-methionine. 188–191 (NPPY) contacts substrate.

It belongs to the protein N5-glutamine methyltransferase family. PrmC subfamily.

It carries out the reaction L-glutaminyl-[peptide chain release factor] + S-adenosyl-L-methionine = N(5)-methyl-L-glutaminyl-[peptide chain release factor] + S-adenosyl-L-homocysteine + H(+). Methylates the class 1 translation termination release factors RF1/PrfA and RF2/PrfB on the glutamine residue of the universally conserved GGQ motif. The polypeptide is Release factor glutamine methyltransferase (Mycobacterium tuberculosis (strain CDC 1551 / Oshkosh)).